The chain runs to 658 residues: PTS system 2-O-alpha-mannosyl-D-glycerate-specific EIIABC component (658 aa).

At 1–313 (MVLFYRAHWR…TELKQALLSG (313 aa)) the chain is on the periplasmic side. One can recognise a PTS EIIA type-2 domain in the interval 25–171 (TLTHRDALCL…DELLSALDDK (147 aa)). Residue His-87 is the Tele-phosphohistidine intermediate; for EIIA activity of the active site. Position 87 is a phosphohistidine; by HPr (His-87). The 97-residue stretch at 186–282 (IVCVTACPAG…AEALIQQALT (97 aa)) folds into the PTS EIIB type-2 domain. Cys-192 (phosphocysteine intermediate; for EIIB activity) is an active-site residue. Cys-192 carries the post-translational modification Phosphocysteine; by EIIA. The region spanning 306–641 (LKQALLSGIS…AISTAILLMW (336 aa)) is the PTS EIIC type-2 domain. The chain crosses the membrane as a helical span at residues 314–334 (ISFAVPLIVAGGTVLAVAVLL). The Cytoplasmic portion of the chain corresponds to 335 to 358 (SQIFGLQDLFNEENSWLWMYRKLG). A helical membrane pass occupies residues 359 to 379 (GGLLGILMVPVLAAYTAYSLA). Topologically, residues 380 to 389 (DKPALAPGFA) are periplasmic. The helical transmembrane segment at 390 to 410 (AGLAANMIGSGFLGAVVGGLI) threads the bilayer. Residues 411–433 (AGYLMRWVKNHLRLSSKFNGFLT) lie on the Cytoplasmic side of the membrane. A helical transmembrane segment spans residues 434–454 (FYLYPVLGTLGAGSLMLFVVG). At 455-474 (EPVAWINNSLTAWLNGLSGS) the chain is on the periplasmic side. Residues 475-495 (NALLLGAILGFMCSFDLGGPV) traverse the membrane as a helical segment. The Cytoplasmic segment spans residues 496-500 (NKAAY). Residues 501 to 521 (AFCLGAMANGVYGPYAIFASV) form a helical membrane-spanning segment. Residues 522–551 (KMVSAFTVTASTMLAPRLFKEFEIETGKST) lie on the Periplasmic side of the membrane. The helical transmembrane segment at 552–572 (WLLGLAGITEGAIPMAIEDPL) threads the bilayer. Residue Arg-573 is a topological domain, cytoplasmic. The helical transmembrane segment at 574–594 (VIGSFVLGSMVTGAIVGAMNI) threads the bilayer. Residues 595–620 (GLSTPGAGIFSLFLLHDNGAGGVMAA) lie on the Periplasmic side of the membrane. A helical membrane pass occupies residues 621–641 (IGWFGAALVGAAISTAILLMW). Topologically, residues 642–658 (RRHAVKHGNYLTDGVMP) are cytoplasmic.

It localises to the cell inner membrane. The catalysed reaction is (2R)-2-O-(alpha-D-mannosyl)-glycerate(out) + N(pros)-phospho-L-histidyl-[protein] = (2R)-2-O-(6-phospho-alpha-D-mannosyl)-glycerate(in) + L-histidyl-[protein]. Functionally, the phosphoenolpyruvate-dependent sugar phosphotransferase system (sugar PTS), a major carbohydrate active transport system, catalyzes the phosphorylation of incoming sugar substrates concomitantly with their translocation across the cell membrane. This system is involved in mannosyl-D-glycerate transport. Also involved in thermoinduction of ompC. The protein is PTS system 2-O-alpha-mannosyl-D-glycerate-specific EIIABC component of Escherichia coli (strain K12).